The primary structure comprises 475 residues: Methylenetetrahydrofolate--tRNA-(uracil-5-)-methyltransferase TrmFO (475 aa).

9 to 14 (GGGLAG) contributes to the FAD binding site. Residues 427 to 447 (APRNETGRRLRGPEKAALKKR) are disordered.

It belongs to the MnmG family. TrmFO subfamily. Requires FAD as cofactor.

The protein localises to the cytoplasm. It carries out the reaction uridine(54) in tRNA + (6R)-5,10-methylene-5,6,7,8-tetrahydrofolate + NADH + H(+) = 5-methyluridine(54) in tRNA + (6S)-5,6,7,8-tetrahydrofolate + NAD(+). It catalyses the reaction uridine(54) in tRNA + (6R)-5,10-methylene-5,6,7,8-tetrahydrofolate + NADPH + H(+) = 5-methyluridine(54) in tRNA + (6S)-5,6,7,8-tetrahydrofolate + NADP(+). Its function is as follows. Catalyzes the folate-dependent formation of 5-methyl-uridine at position 54 (M-5-U54) in all tRNAs. The protein is Methylenetetrahydrofolate--tRNA-(uracil-5-)-methyltransferase TrmFO of Methylobacterium radiotolerans (strain ATCC 27329 / DSM 1819 / JCM 2831 / NBRC 15690 / NCIMB 10815 / 0-1).